We begin with the raw amino-acid sequence, 710 residues long: Polyribonucleotide nucleotidyltransferase (710 aa).

Mg(2+) is bound by residues Asp489 and Asp495. One can recognise a KH domain in the interval 556 to 615 (PKIDTIKIDVDKIKVVIGKGGETIDKIIAETGVKIDIDDEGNVSIYSSDQAAIDRTKEII). The 69-residue stretch at 625-693 (GEVYHAKVVR…EKGRVDASMK (69 aa)) folds into the S1 motif domain. The tract at residues 691–710 (SMKALIPRPPKPEKKEEKHD) is disordered. Over residues 700–710 (PKPEKKEEKHD) the composition is skewed to basic and acidic residues.

It belongs to the polyribonucleotide nucleotidyltransferase family. Requires Mg(2+) as cofactor.

It is found in the cytoplasm. The enzyme catalyses RNA(n+1) + phosphate = RNA(n) + a ribonucleoside 5'-diphosphate. In terms of biological role, involved in mRNA degradation. Catalyzes the phosphorolysis of single-stranded polyribonucleotides processively in the 3'- to 5'-direction. This chain is Polyribonucleotide nucleotidyltransferase, found in Streptococcus pyogenes serotype M1.